We begin with the raw amino-acid sequence, 142 residues long: Hemoglobin subunit alpha-1 (142 aa).

Ser1 is subject to N-acetylserine. Residues 1-142 (SLSDKDKAAV…VALALAQRYR (142 aa)) form the Globin domain. His59 is an O2 binding site. Residue His88 coordinates heme b.

It belongs to the globin family. As to quaternary structure, hb1 is a heterotetramer of two alpha-2 chains and two beta chains. Red blood cells.

Functionally, involved in oxygen transport from gills to the various peripheral tissues. The polypeptide is Hemoglobin subunit alpha-1 (hba1) (Notothenia neglecta (Yellowbelly rockcod)).